Here is a 502-residue protein sequence, read N- to C-terminus: ATP synthase subunit alpha (502 aa).

169-176 is a binding site for ATP; that stretch reads GDRQTGKT.

The protein belongs to the ATPase alpha/beta chains family. As to quaternary structure, F-type ATPases have 2 components, CF(1) - the catalytic core - and CF(0) - the membrane proton channel. CF(1) has five subunits: alpha(3), beta(3), gamma(1), delta(1), epsilon(1). CF(0) has three main subunits: a(1), b(2) and c(9-12). The alpha and beta chains form an alternating ring which encloses part of the gamma chain. CF(1) is attached to CF(0) by a central stalk formed by the gamma and epsilon chains, while a peripheral stalk is formed by the delta and b chains.

It is found in the cell membrane. The enzyme catalyses ATP + H2O + 4 H(+)(in) = ADP + phosphate + 5 H(+)(out). In terms of biological role, produces ATP from ADP in the presence of a proton gradient across the membrane. The alpha chain is a regulatory subunit. This Staphylococcus aureus (strain Mu3 / ATCC 700698) protein is ATP synthase subunit alpha.